The primary structure comprises 324 residues: Acetyl-coenzyme A carboxylase carboxyl transferase subunit alpha (324 aa).

One can recognise a CoA carboxyltransferase C-terminal domain in the interval 37 to 291 (KLERRLDKLK…RDFILREWLR (255 aa)).

It belongs to the AccA family. In terms of assembly, acetyl-CoA carboxylase is a heterohexamer composed of biotin carboxyl carrier protein (AccB), biotin carboxylase (AccC) and two subunits each of ACCase subunit alpha (AccA) and ACCase subunit beta (AccD).

The protein resides in the cytoplasm. It catalyses the reaction N(6)-carboxybiotinyl-L-lysyl-[protein] + acetyl-CoA = N(6)-biotinyl-L-lysyl-[protein] + malonyl-CoA. Its pathway is lipid metabolism; malonyl-CoA biosynthesis; malonyl-CoA from acetyl-CoA: step 1/1. Functionally, component of the acetyl coenzyme A carboxylase (ACC) complex. First, biotin carboxylase catalyzes the carboxylation of biotin on its carrier protein (BCCP) and then the CO(2) group is transferred by the carboxyltransferase to acetyl-CoA to form malonyl-CoA. In Chlamydia abortus (strain DSM 27085 / S26/3) (Chlamydophila abortus), this protein is Acetyl-coenzyme A carboxylase carboxyl transferase subunit alpha.